The sequence spans 320 residues: Cytochrome f (320 aa).

The signal sequence occupies residues 1 to 35 (MENRNTFSWVKEQITRSISVSIMIYVITRTSISNA). Heme-binding residues include Tyr-36, Cys-56, Cys-59, and His-60. Residues 286–305 (VQGLLFFFASVILAQVFLVL) form a helical membrane-spanning segment.

This sequence belongs to the cytochrome f family. As to quaternary structure, the 4 large subunits of the cytochrome b6-f complex are cytochrome b6, subunit IV (17 kDa polypeptide, petD), cytochrome f and the Rieske protein, while the 4 small subunits are PetG, PetL, PetM and PetN. The complex functions as a dimer. Heme serves as cofactor.

The protein localises to the plastid. It is found in the chloroplast thylakoid membrane. In terms of biological role, component of the cytochrome b6-f complex, which mediates electron transfer between photosystem II (PSII) and photosystem I (PSI), cyclic electron flow around PSI, and state transitions. This Triticum aestivum (Wheat) protein is Cytochrome f (petA).